We begin with the raw amino-acid sequence, 318 residues long: Ribonuclease Z (318 aa).

Positions 62, 64, 66, 67, 140, 211, and 269 each coordinate Zn(2+). The active-site Proton acceptor is the Asp66.

Belongs to the RNase Z family. In terms of assembly, homodimer. The cofactor is Zn(2+).

The catalysed reaction is Endonucleolytic cleavage of RNA, removing extra 3' nucleotides from tRNA precursor, generating 3' termini of tRNAs. A 3'-hydroxy group is left at the tRNA terminus and a 5'-phosphoryl group is left at the trailer molecule.. Its function is as follows. Zinc phosphodiesterase, which displays some tRNA 3'-processing endonuclease activity. Probably involved in tRNA maturation, by removing a 3'-trailer from precursor tRNA. In Brevibacillus brevis (strain 47 / JCM 6285 / NBRC 100599), this protein is Ribonuclease Z.